The sequence spans 109 residues: Aquaporin-2 (109 aa).

At 1–6 the chain is on the cytoplasmic side; that stretch reads SIAFSR. The helical transmembrane segment at 7 to 27 threads the bilayer; the sequence is AVFAEFLATLLFVFFGLGSAL. The Extracellular segment spans residues 28 to 35; it reads NWPSALPS. A helical transmembrane segment spans residues 36-54; sequence TLQIAMAFGLGIGTLVQAL. The Cytoplasmic segment spans residues 55–59; that stretch reads GHVSG. Residues 60 to 69 constitute an intramembrane region (discontinuously helical); the sequence is AHINPAVTVA. Positions 63 to 65 match the NPA 1 motif; that stretch reads NPA. The Cytoplasmic portion of the chain corresponds to 70-80; the sequence is CLVGCHVSFLR. The chain crosses the membrane as a helical span at residues 81–102; the sequence is AAFYVAAQLLGAVAGAALLHEI. The Extracellular segment spans residues 103–109; that stretch reads TPAEVRG.

It belongs to the MIP/aquaporin (TC 1.A.8) family. Homotetramer. In terms of processing, serine phosphorylation is necessary and sufficient for expression at the apical membrane. Endocytosis is not phosphorylation-dependent. Post-translationally, N-glycosylated.

It localises to the apical cell membrane. It is found in the basolateral cell membrane. The protein localises to the cell membrane. The protein resides in the cytoplasmic vesicle membrane. Its subcellular location is the golgi apparatus. It localises to the trans-Golgi network membrane. It carries out the reaction H2O(in) = H2O(out). It catalyses the reaction glycerol(in) = glycerol(out). Functionally, forms a water-specific channel that provides the plasma membranes of renal collecting duct with high permeability to water, thereby permitting water to move in the direction of an osmotic gradient. Plays an essential role in renal water homeostasis. Could also be permeable to glycerol. In Oryctolagus cuniculus (Rabbit), this protein is Aquaporin-2.